We begin with the raw amino-acid sequence, 268 residues long: Small ribosomal subunit protein eS1 (268 aa).

Disordered stretches follow at residues 1 to 21 (MAVG…KKKV) and 238 to 268 (GGGK…QEAV).

Belongs to the eukaryotic ribosomal protein eS1 family. Component of the small ribosomal subunit. Mature ribosomes consist of a small (40S) and a large (60S) subunit. The 40S subunit contains about 33 different proteins and 1 molecule of RNA (18S). The 60S subunit contains about 49 different proteins and 3 molecules of RNA (28S, 5.8S and 5S).

The protein localises to the cytoplasm. Its function is as follows. Essential for oogenesis; required for late follicle cell development. The chain is Small ribosomal subunit protein eS1 from Drosophila ananassae (Fruit fly).